A 136-amino-acid polypeptide reads, in one-letter code: Large ribosomal subunit protein uL16 (136 aa).

The protein belongs to the universal ribosomal protein uL16 family. As to quaternary structure, part of the 50S ribosomal subunit.

In terms of biological role, binds 23S rRNA and is also seen to make contacts with the A and possibly P site tRNAs. This is Large ribosomal subunit protein uL16 from Karelsulcia muelleri (strain GWSS) (Sulcia muelleri).